A 389-amino-acid chain; its full sequence is Lipid-A-disaccharide synthase (389 aa).

This sequence belongs to the LpxB family.

It carries out the reaction a lipid X + a UDP-2-N,3-O-bis[(3R)-3-hydroxyacyl]-alpha-D-glucosamine = a lipid A disaccharide + UDP + H(+). It participates in bacterial outer membrane biogenesis; LPS lipid A biosynthesis. Condensation of UDP-2,3-diacylglucosamine and 2,3-diacylglucosamine-1-phosphate to form lipid A disaccharide, a precursor of lipid A, a phosphorylated glycolipid that anchors the lipopolysaccharide to the outer membrane of the cell. This chain is Lipid-A-disaccharide synthase, found in Histophilus somni (strain 2336) (Haemophilus somnus).